Reading from the N-terminus, the 346-residue chain is Fe(3+) ions import ATP-binding protein FbpC 1 (346 aa).

Positions 5 to 235 (LEVDGVDKSF…PIDVPTAEFI (231 aa)) constitute an ABC transporter domain. 37 to 44 (GPSGCGKT) provides a ligand contact to ATP.

Belongs to the ABC transporter superfamily. Fe(3+) ion importer (TC 3.A.1.10) family. As to quaternary structure, the complex is composed of two ATP-binding proteins (FbpC), two transmembrane proteins (FbpB) and a solute-binding protein (FbpA).

It is found in the cell membrane. The enzyme catalyses Fe(3+)(out) + ATP + H2O = Fe(3+)(in) + ADP + phosphate + H(+). Functionally, part of the ABC transporter complex FbpABC involved in Fe(3+) ions import. Responsible for energy coupling to the transport system. The chain is Fe(3+) ions import ATP-binding protein FbpC 1 from Rhodococcus jostii (strain RHA1).